A 126-amino-acid polypeptide reads, in one-letter code: Small ribosomal subunit protein uS8 (126 aa).

This sequence belongs to the universal ribosomal protein uS8 family. As to quaternary structure, part of the 30S ribosomal subunit. Contacts proteins S5 and S12.

Its function is as follows. One of the primary rRNA binding proteins, it binds directly to 16S rRNA central domain where it helps coordinate assembly of the platform of the 30S subunit. This Desulfovibrio desulfuricans (strain ATCC 27774 / DSM 6949 / MB) protein is Small ribosomal subunit protein uS8.